We begin with the raw amino-acid sequence, 3567 residues long: Zinc finger homeobox protein 4 (3567 aa).

Met1 carries the post-translational modification N-acetylmethionine. 4 disordered regions span residues 1–54, 425–480, 522–545, and 565–611; these read METC…LKTD, LSHS…AYSN, TSSSSATVSDDTEKKKQTAAVRAS, and SKDS…SPGS. Residues 9–28 are compositionally biased toward polar residues; it reads ISRQENGQSTSKLCGTTQLD. Composition is skewed to basic and acidic residues over residues 39–54 and 434–452; these read EPDRENSSTDDNLKTD and KMSESKDQENNCERPKESN. Acidic residues predominate over residues 468-480; it reads EPGDEDEEDAYSN. 3 consecutive C2H2-type zinc fingers follow at residues 613-636, 644-667, and 699-723; these read IECPKCDTVLGSSRSLGGHMTMMH, LKCPKCNWHYKYQQTLEAHMKEKH, and FRCEVCNYSTTTKGNLSIHMQSDKH. The C2H2-type 4; degenerate zinc-finger motif lies at 767 to 789; that stretch reads WRCEVCDYETNVARNLRIHMTSE. C2H2-type zinc fingers lie at residues 917–941, 973–995, and 1021–1045; these read YQCKLCNYNTQLKANFQLHCKTDKH, LKCNACDYYTNSVDKLRLHTTNH, and YYCAVCDYTTKVKLNLVQHVRSVKH. Positions 1098–1160 are disordered; it reads EQHEEAEGAI…EDVATKRSKP (63 aa). Basic and acidic residues-rich tracts occupy residues 1120–1132 and 1148–1160; these read TSERDNSEGKNSN and AKEEDVATKRSKP. A Glycyl lysine isopeptide (Lys-Gly) (interchain with G-Cter in SUMO2) cross-link involves residue Lys1149. 2 consecutive C2H2-type zinc fingers follow at residues 1172–1195 and 1201–1224; these read YQCPYCNYNSRDQSRIQMHVLSQH and ICCPLCQDVLSNKMHLQLHLTHLH. The disordered stretch occupies residues 1254 to 1324; the sequence is AASEKSERDT…WNKNSSKDVK (71 aa). Residues 1281 to 1310 show a composition bias toward basic and acidic residues; that stretch reads MDDKSMAGLEDSKANVEVKNEEQKPTKEPL. Glycyl lysine isopeptide (Lys-Gly) (interchain with G-Cter in SUMO2) cross-links involve residues Lys1299 and Lys1324. 2 C2H2-type zinc fingers span residues 1352 to 1374 and 1380 to 1403; these read YRCNHCSLAFKTMQKLQIHSQYH and TMCNLCQRSFRTFQALKKHLEAGH. Residues 1429 to 1480 form a disordered region; that stretch reads ETMSQDDHGLEQEMEREYEVDHEGKASPVGSDSSSIPDDMGSEPKRTLPFRK. The span at 1433–1453 shows a compositional bias: basic and acidic residues; that stretch reads QDDHGLEQEMEREYEVDHEGK. Residues 1496–1522 form a C2H2-type 12 zinc finger; that stretch reads YKCTVCKESFTQKNILLVHYNSVSHLH. A Glycyl lysine isopeptide (Lys-Gly) (interchain with G-Cter in SUMO2) cross-link involves residue Lys1546. A C2H2-type 13 zinc finger spans residues 1548–1572; sequence YKCSICNVAYSQSSTLEIHMRSVLH. 2 stretches are compositionally biased toward low complexity: residues 1761–1772 and 1779–1791; these read TQPQLQPQKQQQ and QQQQQQASKLLKQ. Disordered regions lie at residues 1761–1791 and 1809–1858; these read TQPQLQPQKQQQQPPPPQQQQQQQASKLLKQ and SYKE…IASG. Lys1790 is covalently cross-linked (Glycyl lysine isopeptide (Lys-Gly) (interchain with G-Cter in SUMO2)). Basic and acidic residues predominate over residues 1809 to 1845; it reads SYKEAEDISEKPEKPKQEFISEGEGLKEGKDTKKQKS. The segment at 1901–1924 adopts a C2H2-type 14 zinc-finger fold; that stretch reads LECGTCGKLFSNVLILKSHQEHVH. Residues 1948–2024 form a disordered region; sequence YPISPSSPET…PPSAPPQVQL (77 aa). Pro residues-rich tracts occupy residues 1955-1974 and 1991-2019; these read PETPPPPPPPPPLPPAPPQP and QAPPPTPPPPPPPPPPPPPPPPPPPPSAP. 2 consecutive DNA-binding regions (homeobox) follow at residues 2084-2143 and 2181-2240; these read FKRP…RQRN and KRSS…RKSY. Residues 2267–2291 form a C2H2-type 15; degenerate zinc finger; that stretch reads YQCKKCNVVFPRIFDLITHQKKQCY. Disordered stretches follow at residues 2289–2311 and 2328–2431; these read QCYKDEDDDAQDESQTEDSMDAT and AKNA…SPLQ. Residues 2293-2309 show a composition bias toward acidic residues; that stretch reads DEDDDAQDESQTEDSMD. The segment covering 2331-2345 has biased composition (low complexity); that stretch reads AAAPAASSGSGTSTP. A compositionally biased stretch (basic and acidic residues) spans 2352 to 2370; it reads PEPEKTSPKPEYPAEKPKQ. A compositionally biased stretch (polar residues) spans 2419–2431; that stretch reads SASQTPVPSSPLQ. Residues 2448–2470 form a C2H2-type 16 zinc finger; sequence YQCDQCTVAFPTLELWQEHQHMH. Positions 2507-2530 are enriched in polar residues; it reads LGSSLTQMPPQASSSHTTAPTTVA. Residues 2507-2564 are disordered; that stretch reads LGSSLTQMPPQASSSHTTAPTTVAASLKRKLDDKEDNNCSEKEGGNSGEDQHRDKRLR. Residues 2535-2559 show a composition bias toward basic and acidic residues; sequence RKLDDKEDNNCSEKEGGNSGEDQHR. The segment at residues 2560–2619 is a DNA-binding region (homeobox 3); that stretch reads DKRLRTTITPEQLEILYEKYLLDSNPTRKMLDHIAREVGLKKRVVQVWFQNTRARERKGQ. The C2H2-type 17 zinc finger occupies 2630–2653; it reads KRCPFCRALFKAKSALESHIRSRH. The residue at position 2663 (Ser2663) is a Phosphoserine. A compositionally biased stretch (polar residues) spans 2764-2785; it reads AISDATTGDEGNTEMESTTGSS. Disordered stretches follow at residues 2764–2811 and 2829–2885; these read AISD…TTPT and HFND…PGHK. The segment covering 2830–2839 has biased composition (basic and acidic residues); sequence FNDKDGDHDQ. Low complexity predominate over residues 2862-2874; the sequence is PSSPNPFGSSNPF. The homeobox 4 DNA-binding region spans 2884–2943; it reads HKRFRTQMSNLQLKVLKACFSDYRTPTMQECEMLGNEIGLPKRVVQVWFQNARAKEKKFK. The C2H2-type 18 zinc-finger motif lies at 2962-2986; sequence PECTLCGVKYSARLSIRDHIFSKQH. The segment covering 3092–3110 has biased composition (low complexity); the sequence is SATSSPALSLSSAPTKPLL. Disordered regions lie at residues 3092–3172 and 3281–3337; these read SATS…KEEK and LQKQ…LESK. Residues 3111–3125 show a composition bias toward pro residues; the sequence is QTPPPPPPPPPPPPS. The segment covering 3126–3135 has biased composition (polar residues); sequence SSLSGQQTEQ. Residues 3153 to 3172 show a composition bias toward basic and acidic residues; sequence IKEEELEATKPEKHPKKEEK. Lys3154 participates in a covalent cross-link: Glycyl lysine isopeptide (Lys-Gly) (interchain with G-Cter in SUMO2). The stretch at 3265–3294 forms a coiled coil; the sequence is ALLQQYQQYQQNLQESLQKQQKQQQEQQQK. Over residues 3281–3293 the composition is skewed to low complexity; it reads LQKQQKQQQEQQQ. Residues 3294 to 3314 show a composition bias toward polar residues; sequence KPVQAKTSKVESDQPQNSNDA. Basic and acidic residues predominate over residues 3315–3337; that stretch reads SETKEDKSTATESTKEEPQLESK. The segment at 3354 to 3378 adopts a C2H2-type 19; degenerate zinc-finger fold; that stretch reads FICRKCQMMFTDEDAAVNHQKSFCY. Residues 3398–3422 form a C2H2-type 20 zinc finger; it reads YQCLACDVAISGNEALSQHLQSSLH. 2 disordered regions span residues 3443–3462 and 3511–3534; these read HSVCSPNPNTTSTSQSAASS and STSGVQTSLPTESCSDESDSELSQ. Positions 3447-3462 are enriched in low complexity; that stretch reads SPNPNTTSTSQSAASS.

Belongs to the krueppel C2H2-type zinc-finger protein family. As to expression, expressed in brain, skeletal muscle and liver. Very low expression in stomach.

The protein localises to the nucleus. May play a role in neural and muscle differentiation. May be involved in transcriptional regulation. This is Zinc finger homeobox protein 4 (ZFHX4) from Homo sapiens (Human).